Consider the following 359-residue polypeptide: MQVLRHSEHTLKTALLSKNPDLVSQYEKLDAGEQRLMNEAFQPRNNLFEPITLHSQSDWISSHPEAPQDFEQFFSDRYRKAPCPKKHIIYIQPIGFLGNTRVISEEYIKWLKGYCEAFFYGLKVKFLEPVSVSATKCSFRVNENTQNLQIHTGHILAFLKRNKPEDAFCIVGITMIDLYPRDSWNFVFGQASLSSGVGIFSFARYGKDFYTSKYEGSVKVPQRTVSSDYSIFDNYYIPEITSVLLLRSCKTLTHEIGHILGLRHCQWLACLMQGSNHLEESDRRPLNVCPICLRKLQSAIGFNIVERYKALVKWIDDESCGESGATPKSSSEHVYLPKPVEAFKDWREWILRCIAVLEK.

His-254 is a Zn(2+) binding site. Glu-255 acts as the Proton acceptor in catalysis. Positions 258, 264, 265, 270, 289, and 292 each coordinate Zn(2+).

Belongs to the peptidase M54 family. Zn(2+) serves as cofactor.

Probable zinc metalloprotease. In Rattus norvegicus (Rat), this protein is Archaemetzincin-2 (Amz2).